We begin with the raw amino-acid sequence, 376 residues long: uncharacterized protein (376 aa).

Ser-59 bears the Phosphoserine mark. The Rho-GAP domain occupies 139–367 (VAIEITVQRQ…CLIEHHNAIF (229 aa)). Residues 307–338 (RPSRSPKKSNDFETATPWDLLSDEGEGPDASS) form a disordered region.

This is an uncharacterized protein from Arabidopsis thaliana (Mouse-ear cress).